The following is a 255-amino-acid chain: Leucyl/phenylalanyl-tRNA--protein transferase (255 aa).

This sequence belongs to the L/F-transferase family.

The protein resides in the cytoplasm. It carries out the reaction N-terminal L-lysyl-[protein] + L-leucyl-tRNA(Leu) = N-terminal L-leucyl-L-lysyl-[protein] + tRNA(Leu) + H(+). The enzyme catalyses N-terminal L-arginyl-[protein] + L-leucyl-tRNA(Leu) = N-terminal L-leucyl-L-arginyl-[protein] + tRNA(Leu) + H(+). It catalyses the reaction L-phenylalanyl-tRNA(Phe) + an N-terminal L-alpha-aminoacyl-[protein] = an N-terminal L-phenylalanyl-L-alpha-aminoacyl-[protein] + tRNA(Phe). In terms of biological role, functions in the N-end rule pathway of protein degradation where it conjugates Leu, Phe and, less efficiently, Met from aminoacyl-tRNAs to the N-termini of proteins containing an N-terminal arginine or lysine. The polypeptide is Leucyl/phenylalanyl-tRNA--protein transferase (Polaromonas sp. (strain JS666 / ATCC BAA-500)).